The primary structure comprises 154 residues: UPF0225 protein Spro_2712 (154 aa).

This sequence belongs to the UPF0225 family.

The chain is UPF0225 protein Spro_2712 from Serratia proteamaculans (strain 568).